We begin with the raw amino-acid sequence, 180 residues long: GTP cyclohydrolase 1 (180 aa).

Zn(2+) is bound by residues cysteine 71, histidine 74, and cysteine 142.

This sequence belongs to the GTP cyclohydrolase I family. Toroid-shaped homodecamer, composed of two pentamers of five dimers.

The catalysed reaction is GTP + H2O = 7,8-dihydroneopterin 3'-triphosphate + formate + H(+). It participates in cofactor biosynthesis; 7,8-dihydroneopterin triphosphate biosynthesis; 7,8-dihydroneopterin triphosphate from GTP: step 1/1. This Helicobacter acinonychis (strain Sheeba) protein is GTP cyclohydrolase 1.